We begin with the raw amino-acid sequence, 94 residues long: Putative regulatory protein THA_332 (94 aa).

This sequence belongs to the RemA family.

This is Putative regulatory protein THA_332 from Thermosipho africanus (strain TCF52B).